Consider the following 237-residue polypeptide: Carbonyl reductase family member 4 (237 aa).

Residues 11–14, 34–35, D57, and 84–86 each bind NADP(+); these read SRGI, RN, and AAG. Residue S135 participates in substrate binding. NADP(+)-binding positions include Y148, K152, and 181 to 183; that span reads IHT. Y148 (proton acceptor) is an active-site residue.

It belongs to the short-chain dehydrogenases/reductases (SDR) family. Homotetramer (in vitro). Heterotetramer with HSD17B8; contains two molecules each of HSD17B8 and CBR4.

Its subcellular location is the mitochondrion matrix. It functions in the pathway lipid metabolism; fatty acid biosynthesis. Functionally, the heterotetramer with HSD17B8 has NADH-dependent 3-ketoacyl-acyl carrier protein reductase activity, and thereby plays a role in mitochondrial fatty acid biosynthesis. Within the heterotetramer, HSD17B8 binds NADH; CBR4 binds NADPD. The homotetramer has NADPH-dependent quinone reductase activity. Both homotetramer and the heterotetramer have broad in vitro substrate specificity and can reduce 9,10-phenanthrenequinone, 1,4-benzoquinone and various other o-quinones and p-quinones. The protein is Carbonyl reductase family member 4 (cbr4) of Danio rerio (Zebrafish).